We begin with the raw amino-acid sequence, 32 residues long: Cytochrome b6-f complex subunit 7 (32 aa).

Residues 9-27 form a helical membrane-spanning segment; it reads AAVFWILIPIGLVGGALLL.

The protein belongs to the PetM family. As to quaternary structure, the 4 large subunits of the cytochrome b6-f complex are cytochrome b6, subunit IV (17 kDa polypeptide, PetD), cytochrome f and the Rieske protein, while the 4 small subunits are PetG, PetL, PetM and PetN. The complex functions as a dimer.

The protein resides in the cellular thylakoid membrane. Component of the cytochrome b6-f complex, which mediates electron transfer between photosystem II (PSII) and photosystem I (PSI), cyclic electron flow around PSI, and state transitions. This Prochlorococcus marinus (strain MIT 9515) protein is Cytochrome b6-f complex subunit 7.